The primary structure comprises 363 residues: Cell division cycle-associated protein 3 (363 aa).

Over residues 1–12 (MGSAESKAQVTP) the composition is skewed to polar residues. Disordered regions lie at residues 1–81 (MGSA…TPLR), 126–152 (VESQTAPPAGEHVNDHEVEPSVEKAET), 191–210 (MNDQEESPIAETMNDQEESP), and 231–363 (ENLN…HSNS). The F-box-like stretch occupies residues 93 to 152 (KQLSEVFVAEDSSTEGGPLGFTGPEATNLERQVVESQTAPPAGEHVNDHEVEPSVEKAET). A compositionally biased stretch (basic and acidic residues) spans 137–152 (HVNDHEVEPSVEKAET). The span at 192-210 (NDQEESPIAETMNDQEESP) shows a compositional bias: acidic residues. The segment covering 259–285 (SVVSTESTQATGQQQKTRGKSPRSSGV) has biased composition (polar residues). Low complexity predominate over residues 296–308 (LLSSSSGRSPLRI). Polar residues predominate over residues 311–321 (EDNSPNTNTQH). Residues 353–355 (KEN) carry the KEN box motif.

Interacts with wee1, when wee1 is phosphorylated at 'Ser-38'. Phosphorylated. Post-translationally, ubiquitinated and degraded by the APC/C-Cdh1 complex during G1 phase.

It localises to the cytoplasm. The protein resides in the cytosol. The protein operates within protein modification; protein ubiquitination. Its function is as follows. F-box-like protein which is required for entry into mitosis. Acts by participating in E3 ligase complexes that mediate the ubiquitination and degradation of WEE1 kinase at G2/M phase. The protein is Cell division cycle-associated protein 3 (cdca3) of Xenopus laevis (African clawed frog).